Here is a 489-residue protein sequence, read N- to C-terminus: Protein LMBR1L (489 aa).

Residues 1–21 are Extracellular-facing; sequence MEAPDCEVLSVREQLFHERIR. Residues 1–59 form an interaction with LGB region; that stretch reads MEAPDCEVLSVREQLFHERIRECIISTLLFATLYILCHIFLTRFKKPAEFTTVDDADAT. The segment at 1–76 is LCN1-binding; it reads MEAPDCEVLS…LCTFTLAIAL (76 aa). The chain crosses the membrane as a helical span at residues 22-42; that stretch reads ECIISTLLFATLYILCHIFLT. Over 43 to 66 the chain is Cytoplasmic; it reads RFKKPAEFTTVDDADATVNKIALE. Residues 67-87 form a helical membrane-spanning segment; sequence LCTFTLAIALGAVLLLPFSII. The Extracellular portion of the chain corresponds to 88–114; it reads SNEVLLSLPRNYYIQWLNGSLIHGLWN. A helical transmembrane segment spans residues 115–135; sequence LVFLFSNLSLIFLMPFAYFFT. Topologically, residues 136-154 are cytoplasmic; sequence ESEGFAGSRKGVLGRVYET. A helical membrane pass occupies residues 155-175; the sequence is VVMLMLLTLLVLGMVWVASAI. Residues 176 to 196 lie on the Extracellular side of the membrane; that stretch reads VDNNKASRESLYDFWEYYLPY. Residues 197-217 form a helical membrane-spanning segment; that stretch reads LYSCISFLGVLLLLVCTPLGL. The Cytoplasmic segment spans residues 218 to 305; sequence ARMFSVTGKL…NLGYPLAMLC (88 aa). A helical transmembrane segment spans residues 306–326; that stretch reads LLVLTGLSVLIVAIHILELLI. Residues 327–350 are Extracellular-facing; it reads DEAAMPRGMQGASLGQVSFSKLGS. The helical transmembrane segment at 351–371 threads the bilayer; that stretch reads FGAVVQVVLIFYLMVSSVVGF. At 372 to 388 the chain is on the cytoplasmic side; it reads YSSPLFRSLRPRWHDTA. The chain crosses the membrane as a helical span at residues 389-409; the sequence is MTQIIGNCVCLLVLSSALPVF. Topologically, residues 410 to 431 are extracellular; that stretch reads SRTLGLTRFDLLGDFGRFNWLG. A helical membrane pass occupies residues 432–452; the sequence is NFYIVFLYNAAFAGLTTLCLV. The Cytoplasmic portion of the chain corresponds to 453–489; sequence KTFTAAVRAELIRAFGLDRLPLPVSGFPRASRKTQHQ.

It belongs to the LIMR family. Dimer. Can also form higher oligomers. Interacts with LCN1; this interaction mediates the endocytosis of LCN1. Interacts with UBAC2, FAF2, VCP, AMFR, ZNRF3, CTNNB1, LRP6, GSK3A, GSK3B, FZD6, DVL2 and RNF43. Interaction with LGB and SCGB1A1 is controversial.

The protein localises to the cell membrane. It is found in the endoplasmic reticulum membrane. Functionally, plays an essential role in lymphocyte development by negatively regulating the canonical Wnt signaling pathway. In association with UBAC2 and E3 ubiquitin-protein ligase AMFR, promotes the ubiquitin-mediated degradation of CTNNB1 and Wnt receptors FZD6 and LRP6. LMBR1L stabilizes the beta-catenin destruction complex that is required for regulating CTNNB1 levels. Acts as a LCN1 receptor and can mediate its endocytosis. This chain is Protein LMBR1L (LMBR1L), found in Macaca fascicularis (Crab-eating macaque).